The following is a 371-amino-acid chain: MTTPTQQLSDAGVSIWLDDLSRGRLQTGTLRKLIEEKNVVGVTTNPSIFHAAITSGTDYDATIAEQAAAGSTVEETVFEITTTDVADACDLFAPVAAATRGVDGRVSIEVDPRLAWDTAGTIAEAKHLYKKVNKDNVLIKIPATLEGLEAITATLAEGISVNVTLIFSLERYRAVINAFQSGLEQAKGNGHDLSKIHSVASFFVSRVDAEIDKRLDAIGTDEAKALKGKAGLANARLAYQVYEELFSTERWALLAEAGALPQRPLWASTGVKDPSYPDTLYVTELVAPGVVNTMPEKTLDATFDHGVVTGDTVTRGYDDANATLNALDALGISYNDVVALLESEGLDKFVASWKELLGDVEGALASARKAS.

The active-site Schiff-base intermediate with substrate is Lys-140.

Belongs to the transaldolase family. Type 2 subfamily.

The protein localises to the cytoplasm. The catalysed reaction is D-sedoheptulose 7-phosphate + D-glyceraldehyde 3-phosphate = D-erythrose 4-phosphate + beta-D-fructose 6-phosphate. The protein operates within carbohydrate degradation; pentose phosphate pathway; D-glyceraldehyde 3-phosphate and beta-D-fructose 6-phosphate from D-ribose 5-phosphate and D-xylulose 5-phosphate (non-oxidative stage): step 2/3. Functionally, transaldolase is important for the balance of metabolites in the pentose-phosphate pathway. This is Transaldolase from Arthrobacter sp. (strain FB24).